We begin with the raw amino-acid sequence, 1356 residues long: Probable aldehyde oxidase 3 (1356 aa).

The region spanning Arg10–Ile97 is the 2Fe-2S ferredoxin-type domain. 4 residues coordinate [2Fe-2S] cluster: Cys49, Cys54, Cys57, and Cys79. Residues Val245–Arg437 enclose the FAD-binding PCMH-type domain. The disordered stretch occupies residues Asn552–Ser576.

Belongs to the xanthine dehydrogenase family. As to quaternary structure, aldehyde oxidases (AO) are homodimers and heterodimers of AO subunits. The cofactor is [2Fe-2S] cluster. FAD serves as cofactor. It depends on Mo-molybdopterin as a cofactor.

The enzyme catalyses an aldehyde + O2 + H2O = a carboxylate + H2O2 + H(+). This Oryza sativa subsp. japonica (Rice) protein is Probable aldehyde oxidase 3.